We begin with the raw amino-acid sequence, 185 residues long: Ribosome-recycling factor (185 aa).

The protein belongs to the RRF family.

Its subcellular location is the cytoplasm. In terms of biological role, responsible for the release of ribosomes from messenger RNA at the termination of protein biosynthesis. May increase the efficiency of translation by recycling ribosomes from one round of translation to another. The sequence is that of Ribosome-recycling factor from Bacillus pumilus (strain SAFR-032).